The sequence spans 233 residues: Lipoprotein-releasing system ATP-binding protein LolD (233 aa).

The ABC transporter domain occupies Leu-6–Glu-233. Gly-42–Ser-49 is an ATP binding site.

The protein belongs to the ABC transporter superfamily. Lipoprotein translocase (TC 3.A.1.125) family. As to quaternary structure, the complex is composed of two ATP-binding proteins (LolD) and two transmembrane proteins (LolC and LolE).

It localises to the cell inner membrane. Part of the ABC transporter complex LolCDE involved in the translocation of mature outer membrane-directed lipoproteins, from the inner membrane to the periplasmic chaperone, LolA. Responsible for the formation of the LolA-lipoprotein complex in an ATP-dependent manner. The chain is Lipoprotein-releasing system ATP-binding protein LolD from Salmonella choleraesuis (strain SC-B67).